The following is a 438-amino-acid chain: Aspartate--tRNA(Asp) ligase (438 aa).

Glu170 is an L-aspartate binding site. Positions 192-195 (QLYK) are aspartate. Arg214 serves as a coordination point for L-aspartate. ATP-binding positions include 214-216 (RAE), 222-224 (RHL), and Glu361. Residues Glu361 and Ser364 each contribute to the Mg(2+) site. 2 residues coordinate L-aspartate: Ser364 and Arg368. 409-412 (GAER) serves as a coordination point for ATP.

This sequence belongs to the class-II aminoacyl-tRNA synthetase family. Type 2 subfamily. Homodimer. Requires Mg(2+) as cofactor.

Its subcellular location is the cytoplasm. The catalysed reaction is tRNA(Asp) + L-aspartate + ATP = L-aspartyl-tRNA(Asp) + AMP + diphosphate. Functionally, catalyzes the attachment of L-aspartate to tRNA(Asp) in a two-step reaction: L-aspartate is first activated by ATP to form Asp-AMP and then transferred to the acceptor end of tRNA(Asp). The sequence is that of Aspartate--tRNA(Asp) ligase from Pyrococcus horikoshii (strain ATCC 700860 / DSM 12428 / JCM 9974 / NBRC 100139 / OT-3).